The chain runs to 318 residues: NADH-ubiquinone oxidoreductase chain 1 (318 aa).

8 consecutive transmembrane segments (helical) span residues 2 to 22 (FLIN…FLTL), 69 to 89 (LLFI…WLPI), 102 to 122 (ILFI…SGWA), 146 to 166 (LAII…SSLI), 171 to 191 (YMWI…STLA), 222 to 242 (LFFL…AILF), 253 to 273 (EMFT…FLWI), and 294 to 314 (LPLT…LSSI).

It belongs to the complex I subunit 1 family. Core subunit of respiratory chain NADH dehydrogenase (Complex I) which is composed of 45 different subunits.

It localises to the mitochondrion inner membrane. The catalysed reaction is a ubiquinone + NADH + 5 H(+)(in) = a ubiquinol + NAD(+) + 4 H(+)(out). In terms of biological role, core subunit of the mitochondrial membrane respiratory chain NADH dehydrogenase (Complex I) which catalyzes electron transfer from NADH through the respiratory chain, using ubiquinone as an electron acceptor. Essential for the catalytic activity and assembly of complex I. The polypeptide is NADH-ubiquinone oxidoreductase chain 1 (MT-ND1) (Oryctolagus cuniculus (Rabbit)).